A 74-amino-acid chain; its full sequence is Major structural pilin EpdE (74 aa).

The propeptide occupies 1–12; it reads MKFLEKLTSKKG. At Q13 the chain carries Pyrrolidone carboxylic acid. Residues 13–21 carry the QXSXEXXXL motif; sequence QIAMELGIL.

In terms of processing, the N-terminus is cleaved by the prepilin peptidase EppA, which recognizes the class III signal sequence. N-glycosylated. Glycosylated with an N-linked branched pentasaccharide glycan. May contain glycans at three sites. Glycosylation is AglB-dependent. The N-glycosylation does not occur unless the signal peptide has been cleaved first.

The protein localises to the secreted. The protein resides in the cell surface. Its subcellular location is the fimbrium. Its function is as follows. Major component of the type IV-like pili. In Methanococcus maripaludis (strain DSM 14266 / JCM 13030 / NBRC 101832 / S2 / LL), this protein is Major structural pilin EpdE.